The following is a 273-amino-acid chain: Dormancy associated translation inhibitor (273 aa).

Interacts with human TLR2.

Functionally, involved in translation regulation. Can also stimulate macrophages and peripheral blood mononuclear cells (PBMC) to secrete important cytokines that may be significant in granuloma formation and its maintenance. Increases secretion of IFN-gamma, TNF-alpha, IL-1 beta and IL-8 through human Toll-like receptor 2 (TLR2) signaling pathway. In Mycobacterium tuberculosis (strain CDC 1551 / Oshkosh), this protein is Dormancy associated translation inhibitor.